The primary structure comprises 467 residues: Chromosomal replication initiator protein DnaA (467 aa).

The tract at residues 1–90 (MSLSLWQQCL…KPVTQTPQAA (90 aa)) is domain I, interacts with DnaA modulators. Residues 91–130 (VTSNVAAPAQVAQTQPQRAAPSMRSGWDNVPAPAEPTYRS) are domain II. The tract at residues 131–347 (NVNVKHTFDN…GALNRVIANA (217 aa)) is domain III, AAA+ region. ATP is bound by residues Gly175, Gly177, Lys178, and Thr179. Positions 348–467 (NFTGRAITID…FSNLIRTLSS (120 aa)) are domain IV, binds dsDNA.

It belongs to the DnaA family. As to quaternary structure, oligomerizes as a right-handed, spiral filament on DNA at oriC.

The protein resides in the cytoplasm. Its function is as follows. Plays an essential role in the initiation and regulation of chromosomal replication. ATP-DnaA binds to the origin of replication (oriC) to initiate formation of the DNA replication initiation complex once per cell cycle. Binds the DnaA box (a 9 base pair repeat at the origin) and separates the double-stranded (ds)DNA. Forms a right-handed helical filament on oriC DNA; dsDNA binds to the exterior of the filament while single-stranded (ss)DNA is stabiized in the filament's interior. The ATP-DnaA-oriC complex binds and stabilizes one strand of the AT-rich DNA unwinding element (DUE), permitting loading of DNA polymerase. After initiation quickly degrades to an ADP-DnaA complex that is not apt for DNA replication. Binds acidic phospholipids. In Escherichia coli (strain ATCC 8739 / DSM 1576 / NBRC 3972 / NCIMB 8545 / WDCM 00012 / Crooks), this protein is Chromosomal replication initiator protein DnaA.